The following is a 457-amino-acid chain: Casein kinase 1-like protein 11 (457 aa).

The region spanning 15-284 (FKLGRKLGSG…LRRLFRDLFI (270 aa)) is the Protein kinase domain. Residues 21-29 (LGSGSFGEL) and Lys44 contribute to the ATP site. Residue Asp134 is the Proton acceptor of the active site. 2 disordered regions span residues 305-337 (GSSS…GQDL) and 352-442 (NVSS…EDAI). Positions 311-324 (RPTPRPALDPPGPP) are enriched in pro residues. Polar residues-rich tracts occupy residues 383–403 (NGST…SAEP) and 409–429 (SRLF…QSYE).

This sequence belongs to the protein kinase superfamily. CK1 Ser/Thr protein kinase family. Casein kinase I subfamily. In terms of assembly, monomer. In terms of processing, autophosphorylated.

Its subcellular location is the cytoplasm. It localises to the nucleus. The catalysed reaction is L-seryl-[protein] + ATP = O-phospho-L-seryl-[protein] + ADP + H(+). It carries out the reaction L-threonyl-[protein] + ATP = O-phospho-L-threonyl-[protein] + ADP + H(+). With respect to regulation, partially inhibited by N-(2-aminoethyl)-5-chloroisoquinoline-8-sulfonamide (CKI-7). Its function is as follows. Casein kinases are operationally defined by their preferential utilization of acidic proteins such as caseins as substrates. Can phosphorylate casein, phosvitin, myosin light chains and poly(Glu,Tyr) in vitro. The polypeptide is Casein kinase 1-like protein 11 (Arabidopsis thaliana (Mouse-ear cress)).